Consider the following 92-residue polypeptide: NELL2-interacting cell ontogeny regulator 1 (92 aa).

A signal peptide spans 1 to 30 (MALPSAWSVMRVVIPFISVLGLLGVRLVGA).

Belongs to the NICOL family.

The protein localises to the secreted. It localises to the cytoplasm. It is found in the perinuclear region. MRNA-binding protein which interacts with a range of target mRNAs and may promote extracellular matrix production. May function as a component of lumicrine signaling and may play a crucial role in epididymal-mediated sperm maturation and male fertility. This is NELL2-interacting cell ontogeny regulator 1 from Gallus gallus (Chicken).